A 225-amino-acid chain; its full sequence is ATP synthase subunit a (225 aa).

The next 5 membrane-spanning stretches (helical) occupy residues 16–36 (LFVYAFHFCLVAIIVVLVAKL), 79–99 (LVATIGFVVFFSNAIGIIPGF), 105–125 (SLNLTLTLALIVFFYYHFEGI), 176–196 (LFLLVMLTLAPWFAPLPAYAL), and 202–222 (VLQTFIFMMLTYVYLAGAVAI).

It belongs to the ATPase A chain family. F-type ATPases have 2 components, CF(1) - the catalytic core - and CF(0) - the membrane proton channel. CF(1) has five subunits: alpha(3), beta(3), gamma(1), delta(1), epsilon(1). CF(0) has three main subunits: a(1), b(2) and c(9-12). The alpha and beta chains form an alternating ring which encloses part of the gamma chain. CF(1) is attached to CF(0) by a central stalk formed by the gamma and epsilon chains, while a peripheral stalk is formed by the delta and b chains.

It is found in the cell inner membrane. Key component of the proton channel; it plays a direct role in the translocation of protons across the membrane. In Campylobacter curvus (strain 525.92), this protein is ATP synthase subunit a.